Consider the following 321-residue polypeptide: Protein-L-histidine N-pros-methyltransferase (321 aa).

A signal peptide spans 1 to 24 (MRLWLCWLGCYTLLLWALRRRMWA). Asn-89 carries N-linked (GlcNAc...) asparagine glycosylation. S-adenosyl-L-homocysteine contacts are provided by Glu-177, Asn-213, and Tyr-298.

This sequence belongs to the METTL9 family.

The protein localises to the endoplasmic reticulum. It localises to the mitochondrion. It carries out the reaction L-histidyl-[protein] + S-adenosyl-L-methionine = N(pros)-methyl-L-histidyl-[protein] + S-adenosyl-L-homocysteine + H(+). Protein-histidine N-methyltransferase that specifically catalyzes 1-methylhistidine (pros-methylhistidine) methylation of target proteins. Mediates methylation of proteins with a His-x-His (HxH) motif (where 'x' is preferably a small amino acid); 1-methylhistidine modification may affect the binding of zinc and other metals to its target proteins. The chain is Protein-L-histidine N-pros-methyltransferase from Gallus gallus (Chicken).